We begin with the raw amino-acid sequence, 144 residues long: Cytochrome c oxidase subunit 4 isoform 1, mitochondrial (144 aa).

The Mitochondrial matrix portion of the chain corresponds to 1 to 73; it reads SVVKSEDYTL…SFAEMNRGSN (73 aa). Lysine 4 is modified (N6-acetyllysine; alternate). Lysine 4 bears the N6-succinyllysine; alternate mark. Serine 31 and serine 33 each carry phosphoserine. At lysine 35 the chain carries N6-acetyllysine; alternate. N6-succinyllysine; alternate is present on lysine 35. Residue lysine 42 is modified to N6-acetyllysine. Residues 74–99 traverse the membrane as a helical segment; that stretch reads EWKTVVGAAMFFIGFTAILIMLEKRY. Over 100 to 144 the chain is Mitochondrial intermembrane; the sequence is VYGPLPHTFDKEWVAMQTKRMLDLKVNPVDGLASKWDYEKKEWKK.

It belongs to the cytochrome c oxidase IV family. Component of the cytochrome c oxidase (complex IV, CIV), a multisubunit enzyme composed of 14 subunits. The complex is composed of a catalytic core of 3 subunits MT-CO1, MT-CO2 and MT-CO3, encoded in the mitochondrial DNA, and 11 supernumerary subunits COX4I, COX5A, COX5B, COX6A, COX6B, COX6C, COX7A, COX7B, COX7C, COX8 and NDUFA4, which are encoded in the nuclear genome. The complex exists as a monomer or a dimer and forms supercomplexes (SCs) in the inner mitochondrial membrane with NADH-ubiquinone oxidoreductase (complex I, CI) and ubiquinol-cytochrome c oxidoreductase (cytochrome b-c1 complex, complex III, CIII), resulting in different assemblies (supercomplex SCI(1)III(2)IV(1) and megacomplex MCI(2)III(2)IV(2)). Interacts with PHB2; the interaction decreases in absence of SPHK2. Interacts with AFG1L. Interacts with ABCB7; this interaction allows the regulation of cellular iron homeostasis and cellular reactive oxygen species (ROS) levels in cardiomyocytes. Interacts with FLVCR2; this interaction occurs in the absence of heme and is disrupted upon heme binding. Interacts with IRGC.

The protein resides in the mitochondrion inner membrane. Its pathway is energy metabolism; oxidative phosphorylation. Functionally, component of the cytochrome c oxidase, the last enzyme in the mitochondrial electron transport chain which drives oxidative phosphorylation. The respiratory chain contains 3 multisubunit complexes succinate dehydrogenase (complex II, CII), ubiquinol-cytochrome c oxidoreductase (cytochrome b-c1 complex, complex III, CIII) and cytochrome c oxidase (complex IV, CIV), that cooperate to transfer electrons derived from NADH and succinate to molecular oxygen, creating an electrochemical gradient over the inner membrane that drives transmembrane transport and the ATP synthase. Cytochrome c oxidase is the component of the respiratory chain that catalyzes the reduction of oxygen to water. Electrons originating from reduced cytochrome c in the intermembrane space (IMS) are transferred via the dinuclear copper A center (CU(A)) of subunit 2 and heme A of subunit 1 to the active site in subunit 1, a binuclear center (BNC) formed by heme A3 and copper B (CU(B)). The BNC reduces molecular oxygen to 2 water molecules using 4 electrons from cytochrome c in the IMS and 4 protons from the mitochondrial matrix. The protein is Cytochrome c oxidase subunit 4 isoform 1, mitochondrial (COX4I1) of Pithecia pithecia (White-faced saki).